The primary structure comprises 323 residues: ComG operon protein 2 (323 aa).

3 helical membrane-spanning segments follow: residues tyrosine 93 to isoleucine 113, leucine 143 to phenylalanine 163, and methionine 296 to methionine 316.

The protein belongs to the GSP F family.

The protein localises to the cell membrane. Required for transformation and DNA binding. The protein is ComG operon protein 2 (comGB) of Bacillus subtilis (strain 168).